A 306-amino-acid polypeptide reads, in one-letter code: MSTLGHQYDNSLVSNAFGFLRLPMNFQPYDSDADWVITGVPFDMATSGRAGGRHGPAAIRQVSTNLAWEHHRFPWSFDMRERLNVVDCGDLVYAFGDAREMSEKLQAHAEKLLSAGKRMLSFGGDHFVTLPLLRAHAKHFGKMALVHFDAHTDTYANGCEFDHGTMFYTAPKEGLIDPHHSVQIGIRTEFDKDNGFTVLDACQVNDRGVDDILAQVKQIVGDMPVYLTFDIDCLDPAFAPGTGTPVIGGLTSDRAIKLVRGLKDLNIVGMDVVEVAPAYDQSEITALAAATLALEMLYIQAAKKGE.

Residues H126, D149, H151, D153, D230, and D232 each contribute to the Mn(2+) site.

Belongs to the arginase family. Agmatinase subfamily. It depends on Mn(2+) as a cofactor.

It catalyses the reaction agmatine + H2O = urea + putrescine. The protein operates within amine and polyamine biosynthesis; putrescine biosynthesis via agmatine pathway; putrescine from agmatine: step 1/1. Its function is as follows. Catalyzes the formation of putrescine from agmatine. The chain is Agmatinase from Salmonella dublin (strain CT_02021853).